Consider the following 301-residue polypeptide: Probable alpha-L-glutamate ligase (301 aa).

The 184-residue stretch at 104-287 (LQLLSRRGIG…VAGMIIEHLE (184 aa)) folds into the ATP-grasp domain. Residues Lys141, 178–179 (EY), Asp187, and 211–213 (RSN) each bind ATP. 3 residues coordinate Mg(2+): Asp248, Glu260, and Asn262. 3 residues coordinate Mn(2+): Asp248, Glu260, and Asn262.

It belongs to the RimK family. Requires Mg(2+) as cofactor. Mn(2+) serves as cofactor.

This chain is Probable alpha-L-glutamate ligase, found in Pseudomonas entomophila (strain L48).